Consider the following 339-residue polypeptide: MARPKVYVTRIIPEPGLSMLKECCDVVVHESKDWPPSREELLRNIRDKDALLCLLTDKIDAEVMDAAPNLKVISTYSVGFDHIDIPEATKRGIYVTHTPGVLTDAVAEFTVGLILAVTRRIVEADKIIRTGQWDKPWNPYFLTGPELKGKTIGLVGLGRIGVATAKRLSSFDVKILYYDIERRWDVETVIPNMEFTDLDTLLEKSDIVSIHVPLTKETYHLINEERLRKMKKTAYLINTARGPVVDTEALVKALKEGWIAGAALDVFEQEPLPPNHPLTKFDNVVLAPHIASATIEARQRMAELAARNLIAVLKGEMPPALVNKEVLKVRPLEKVKMIP.

Residues 157–160 (LGRI) and 239–241 (TAR) contribute to the NADP(+) site. Active-site residues include arginine 241 and glutamate 270. Histidine 289 serves as the catalytic Proton donor. Residue 289-291 (HIA) participates in NADP(+) binding.

It belongs to the D-isomer specific 2-hydroxyacid dehydrogenase family. GyaR subfamily. Homodimer.

It localises to the cytoplasm. The catalysed reaction is glycolate + NAD(+) = glyoxylate + NADH + H(+). This is Glyoxylate reductase from Thermofilum pendens (strain DSM 2475 / Hrk 5).